A 138-amino-acid polypeptide reads, in one-letter code: ATP synthase epsilon chain (138 aa).

This sequence belongs to the ATPase epsilon chain family. As to quaternary structure, F-type ATPases have 2 components, CF(1) - the catalytic core - and CF(0) - the membrane proton channel. CF(1) has five subunits: alpha(3), beta(3), gamma(1), delta(1), epsilon(1). CF(0) has three main subunits: a, b and c.

Its subcellular location is the cell inner membrane. Its function is as follows. Produces ATP from ADP in the presence of a proton gradient across the membrane. This is ATP synthase epsilon chain from Wigglesworthia glossinidia brevipalpis.